The sequence spans 556 residues: Methyltransferase/ribosomally synthesized type II borosin cyclic peptide precursor pgiMA1 (556 aa).

The segment at 1-250 is methyltransferase domain; it reads MSSASSDSNT…SCSTLYVPPL (250 aa). Catalysis depends on residues arginine 74, tyrosine 78, and tyrosine 100. Residues tyrosine 100, histidine 102, valine 105, glutamine 174, glycine 212, serine 243, and threonine 244 each contribute to the S-adenosyl-L-methionine site. The clasp domain stretch occupies residues 251–377; that stretch reads THANKFSGNM…GAVFGVMKLR (127 aa). The tract at residues 378 to 386 is precursor leader; that stretch reads ASEVANEQG. Aspartate 421, aspartate 434, aspartate 447, aspartate 460, aspartate 473, aspartate 486, aspartate 499, aspartate 512, aspartate 525, and aspartate 538 each carry N-methylaspartate. Positions 543 to 556 are excised as a propeptide; the sequence is AVPVPDHVAGIPCM.

It in the N-terminal section; belongs to the precorrin methyltransferase family. In terms of assembly, homodimer. PgiMA1 automethylates at Asp-421, Asp-434, Asp-447, Asp-460, Asp-473, Asp-486, Asp-499, Asp-512, Asp-525 and Asp-538 before being processed, probably by the M64 family peptidase found in the genes surrounding PgiMA1, to release methylated peptides which then undergos macrocyclization with the N-terminus of the modified core peptides. Peptide backbone alpha-N-methylations change the physicochemical properties of amide bonds to provide structural constraints and other favorable characteristics including biological membrane permeability to peptides.

Its pathway is secondary metabolite biosynthesis. Functionally, fusion protein of the methyltransferase pgiM1 and 12 type II borosin core peptides; part of the gene cluster that mediates the biosynthesis of a type II borosin, a highly methylated cyclic peptide with potent biological activities. Type II borosins derive from the C-terminus of the fusion protein, and it is the same protein that methylates its own C-terminus using S-adenosyl methionine (SAM). The C-terminus is subsequently cleaved off and macrocyclized by a prolyloligopeptidase to give the final product. The polypeptide is Methyltransferase/ribosomally synthesized type II borosin cyclic peptide precursor pgiMA1 (Phlebiopsis gigantea (strain 11061_1 CR5-6) (White-rot fungus)).